The primary structure comprises 574 residues: Sulfate adenylyltransferase (574 aa).

An N-terminal region spans residues 1 to 170 (MANTPHGGVL…LEAINRLEHY (170 aa)). The segment at 171 to 395 (DFLDLRFTPS…LREENPLPAE (225 aa)) is catalytic. Gln-198 is a binding site for sulfate. Residues 198 to 201 (QTRN) and 292 to 295 (GRDH) each bind ATP. Residues Thr-199, Arg-200, and Asn-201 contribute to the active site. Arg-200 serves as a coordination point for sulfate. Ala-296 is a binding site for sulfate. Met-334 is an ATP binding site. The allosteric regulation domain; adenylyl-sulfate kinase-like stretch occupies residues 396–574 (KGFTVFMTGY…LESNGLLDRL (179 aa)). Residues 435 to 438 (ENVR), Arg-452, 478 to 479 (IA), and Lys-516 each bind 3'-phosphoadenylyl sulfate.

It in the N-terminal section; belongs to the sulfate adenylyltransferase family. The protein in the C-terminal section; belongs to the APS kinase family. As to quaternary structure, homohexamer. Dimer of trimers.

The protein localises to the cytoplasm. The enzyme catalyses sulfate + ATP + H(+) = adenosine 5'-phosphosulfate + diphosphate. It functions in the pathway sulfur metabolism; hydrogen sulfide biosynthesis; sulfite from sulfate: step 1/3. Allosterically inhibited by 3'-phosphoadenosine 5'-phosphosulfate (PAPS). In terms of biological role, catalyzes the first intracellular reaction of sulfate assimilation, forming adenosine-5'-phosphosulfate (APS) from inorganic sulfate and ATP. Plays an important role in sulfate activation as a component of the biosynthesis pathway of sulfur-containing amino acids. This chain is Sulfate adenylyltransferase, found in Gibberella zeae (strain ATCC MYA-4620 / CBS 123657 / FGSC 9075 / NRRL 31084 / PH-1) (Wheat head blight fungus).